We begin with the raw amino-acid sequence, 539 residues long: MEKLSETTPNGTSPRTFALNHSRPRSSFKGCSRISDYELLGKLGEGTFGEVHRARLRKTGALVALKKIIMHHEKDGFPITALREIKLLKLLSHKNILRLEDMAIEHPTRQTDKRKKPIVYMATPYMDHDLSGLLDNPSVQFKEPQIKCYMLQLLEGLRYLHDSRILHRDMKAANLLINNKGILQIADFGLARHYDGRTPESGVPMGEGKRDYTGLVVTRWYRPPELLLQLRQYTPAIDVWGVGCVFGEMLYGKPILAGESDAAQLDIIWDLMGSPNEENMPRWKSLPGADHLTPRPRTGNLETRFRQYGSGAVSLLKELLRLDWRTRINAVDALQHPWFKMQPLPLEPHEIPTYEESHELDRRKFHDRKAALPPAPKGGTVGVGPDANGATAGFNSNEPYGNGRNGVNGGRYRNGPDDRRPAWQRERGAGLPPRPPPNNDDADFRERGPPRARGPPGPRGPDVDTYIPAYNRDDPGRRRDDRPPPPRDDRPPPRDDRRRRNSREDRRFDRDRGTMSRSRSPRHDRSRDRDRPDHNGYRR.

Polar residues predominate over residues Met1 to Arg15. The segment at Met1–Ser27 is disordered. Residues Tyr37–Phe339 form the Protein kinase domain. ATP-binding positions include Leu43–Val51 and Lys66. Asp169 serves as the catalytic Proton acceptor. The disordered stretch occupies residues Ala370–Arg539. Composition is skewed to basic and acidic residues over residues Asn414–Gly428, Asn471–Thr514, and Pro521–Arg539.

Belongs to the protein kinase superfamily. CMGC Ser/Thr protein kinase family. CDC2/CDKX subfamily.

The protein resides in the nucleus. The enzyme catalyses L-seryl-[protein] + ATP = O-phospho-L-seryl-[protein] + ADP + H(+). It carries out the reaction L-threonyl-[protein] + ATP = O-phospho-L-threonyl-[protein] + ADP + H(+). It catalyses the reaction [DNA-directed RNA polymerase] + ATP = phospho-[DNA-directed RNA polymerase] + ADP + H(+). Serine/threonine-protein kinase involved in transcription regulation. Phosphorylates the UBC2/RAD6 ubiquitin-conjugating enzyme (E2), leading to monoubiquitination of histone H2B and the silencing of telomeric-associated genes. Also required for histone H3 methylation. Necessary for the recovery from pheromone-induced growth arrest in the cell cycle G1 phase. This is Serine/threonine-protein kinase BUR1 (BUR1) from Gibberella zeae (strain ATCC MYA-4620 / CBS 123657 / FGSC 9075 / NRRL 31084 / PH-1) (Wheat head blight fungus).